The chain runs to 374 residues: Alcohol dehydrogenase 1 (374 aa).

Position 1 is an N-acetylserine (Ser1). Zn(2+)-binding residues include Cys46, His67, Cys97, Cys100, Cys103, Cys111, and Cys174. Residues 199–204, Asp223, Lys228, 292–294, and Arg369 each bind NAD(+); these read GLGGVG and VGV.

It belongs to the zinc-containing alcohol dehydrogenase family. Class-I subfamily. As to quaternary structure, homodimer. Zn(2+) is required as a cofactor.

It is found in the cytoplasm. It catalyses the reaction a primary alcohol + NAD(+) = an aldehyde + NADH + H(+). It carries out the reaction a secondary alcohol + NAD(+) = a ketone + NADH + H(+). This Struthio camelus (Common ostrich) protein is Alcohol dehydrogenase 1 (ADH1).